The primary structure comprises 214 residues: tRNA (guanine-N(7)-)-methyltransferase (214 aa).

S-adenosyl-L-methionine-binding residues include D35, E60, N87, and D113. D113 is a catalytic residue. The substrate site is built by K117 and D149.

Belongs to the class I-like SAM-binding methyltransferase superfamily. TrmB family.

It catalyses the reaction guanosine(46) in tRNA + S-adenosyl-L-methionine = N(7)-methylguanosine(46) in tRNA + S-adenosyl-L-homocysteine. It participates in tRNA modification; N(7)-methylguanine-tRNA biosynthesis. Its function is as follows. Catalyzes the formation of N(7)-methylguanine at position 46 (m7G46) in tRNA. The polypeptide is tRNA (guanine-N(7)-)-methyltransferase (Prochlorococcus marinus (strain NATL1A)).